The primary structure comprises 735 residues: Phosphoribosylformylglycinamidine synthase subunit PurL (735 aa).

His50 is an active-site residue. Positions 53 and 92 each coordinate ATP. A Mg(2+)-binding site is contributed by Glu94. Substrate-binding positions include 95–98 (SHNH) and Arg117. His96 serves as the catalytic Proton acceptor. Asp118 is a binding site for Mg(2+). Gln241 contacts substrate. Asp269 contributes to the Mg(2+) binding site. Residue 313-315 (ESQ) participates in substrate binding. ATP is bound by residues Asp495 and Gly532. Asn533 is a Mg(2+) binding site. Ser535 contacts substrate.

Belongs to the FGAMS family. As to quaternary structure, monomer. Part of the FGAM synthase complex composed of 1 PurL, 1 PurQ and 2 PurS subunits.

The protein resides in the cytoplasm. It carries out the reaction N(2)-formyl-N(1)-(5-phospho-beta-D-ribosyl)glycinamide + L-glutamine + ATP + H2O = 2-formamido-N(1)-(5-O-phospho-beta-D-ribosyl)acetamidine + L-glutamate + ADP + phosphate + H(+). It participates in purine metabolism; IMP biosynthesis via de novo pathway; 5-amino-1-(5-phospho-D-ribosyl)imidazole from N(2)-formyl-N(1)-(5-phospho-D-ribosyl)glycinamide: step 1/2. Its function is as follows. Part of the phosphoribosylformylglycinamidine synthase complex involved in the purines biosynthetic pathway. Catalyzes the ATP-dependent conversion of formylglycinamide ribonucleotide (FGAR) and glutamine to yield formylglycinamidine ribonucleotide (FGAM) and glutamate. The FGAM synthase complex is composed of three subunits. PurQ produces an ammonia molecule by converting glutamine to glutamate. PurL transfers the ammonia molecule to FGAR to form FGAM in an ATP-dependent manner. PurS interacts with PurQ and PurL and is thought to assist in the transfer of the ammonia molecule from PurQ to PurL. The polypeptide is Phosphoribosylformylglycinamidine synthase subunit PurL (Bartonella henselae (strain ATCC 49882 / DSM 28221 / CCUG 30454 / Houston 1) (Rochalimaea henselae)).